Consider the following 125-residue polypeptide: 17 kDa gas vesicle protein (125 aa).

Belongs to the gas vesicle GvpC family.

Its subcellular location is the gas vesicle. In terms of biological role, gas vesicles (GV) are hollow, gas filled proteinaceous nanostructures. During planktonic growth they allow positioning of the organism at a favorable depth for light or nutrient acquisition. In Dactylococcopsis salina (strain PCC 8305) (Myxobactron salinum), this protein is 17 kDa gas vesicle protein.